Consider the following 384-residue polypeptide: Probable 2-heptyl-3-hydroxy-4(1H)-quinolone synthase AqdB2 (384 aa).

It belongs to the 3-hydroxybenzoate 6-hydroxylase family.

It carries out the reaction 2-heptyl-4(1H)-quinolone + NADH + O2 + H(+) = 2-heptyl-3-hydroxy-4(1H)-quinolone + NAD(+) + H2O. Its function is as follows. Involved in the degradation of the Pseudomonas aeruginosa quorum sensing signal molecule HHQ (2-heptyl-4-quinolone) to anthranilic acid. Probably catalyzes the hydroxylation of HHQ to PQS (2-heptyl-3-hydroxy-4-quinolone). The polypeptide is Probable 2-heptyl-3-hydroxy-4(1H)-quinolone synthase AqdB2 (Rhodococcus erythropolis (Arthrobacter picolinophilus)).